Here is an 885-residue protein sequence, read N- to C-terminus: MMGSPPAPPARRLGALAVFLLALFLAAPWGVDCGYNVASVAGSKNRLRARLELAGGGGGAAPELGPDVRRLSLTASLETDSRLHVRITDADHPRWEVPQDVIPRPSPDSFLAATRPGGGRVLSTATSDLTFAIHTSPFRFTVTRRSTGDVLFDTTPNLVFKDRYLELTSSLPPPGRASLYGLGEQTKRTFRLQRNDTFTLWNSDIAAGNVDLNLYGSHPFYMDVRSGGGGGGGAAHGVLLLNSNGMDVIYGGSYVTYKVIGGVLDFYFFAGPSPLAVVDQYTQLIGRPAPMPYWSFGFHQCRYGYKNVADLEGVVAGYAKARIPLEVMWTDIDYMDAYKDFTLDPVNFPADRMRPFVDRLHRNGQKFVVIIDPGINVNTTYGTFVRGMKQDIFLKWNGSNYLGVVWPGNVYFPDFLNPRAAEFWAREIAAFRRTLPVDGLWVDMNEISNFVDPPPLNAIDDPPYRINNSGVRRPINNKTVPASAVHYGGVAEYDAHNLFGFLEARATHDALLRDTGRRPFVLSRSTFVGSGRYTAHWTGDNAATWEDLHYSINTMLSFGLFGIPMIGADICGFGGNTTEELCSRWIQLGAFYPFSRDHSAIGTVRRELYLWESVARSARKALGLRYRLLPYLYTLMYEAHTTGAPIARPLFFSYPGDVETYGIDRQFLLGRGVLVSPVLEPGATTVTAYFPAGRWFSLYDFSLAVATKTGKRVTLPAPADTVNVHVAGGNILTLQQPALTSSRVRQSVVHLLVALADDGTATGDLFLDDGESPEMAGPRSRWSQIKFSGATESGGGVVRVRSHVVHDSYAPSRTMAIGKVVLMGLRSAAPPKGFAVYANGVQVNASTAVGGAAGSPEKGALGVAHVSGLTLVVGQEFDLKVVMTY.

The N-terminal stretch at 1–33 (MMGSPPAPPARRLGALAVFLLALFLAAPWGVDC) is a signal peptide. Asn-195, Asn-378, and Asn-397 each carry an N-linked (GlcNAc...) asparagine glycan. Catalysis depends on residues Asp-443 and Glu-446. N-linked (GlcNAc...) asparagine glycans are attached at residues Asn-467 and Asn-477. Residue Asp-540 is the Proton donor of the active site. Residues Asn-576 and Asn-844 are each glycosylated (N-linked (GlcNAc...) asparagine).

This sequence belongs to the glycosyl hydrolase 31 family.

It catalyses the reaction Hydrolysis of terminal, non-reducing (1-&gt;4)-linked alpha-D-glucose residues with release of alpha-D-glucose.. This chain is Probable alpha-glucosidase Os06g0675700, found in Oryza sativa subsp. japonica (Rice).